A 432-amino-acid polypeptide reads, in one-letter code: Asparagine--tRNA ligase (432 aa).

This sequence belongs to the class-II aminoacyl-tRNA synthetase family. Homodimer.

It localises to the cytoplasm. The catalysed reaction is tRNA(Asn) + L-asparagine + ATP = L-asparaginyl-tRNA(Asn) + AMP + diphosphate + H(+). This chain is Asparagine--tRNA ligase, found in Lacticaseibacillus paracasei (strain ATCC 334 / BCRC 17002 / CCUG 31169 / CIP 107868 / KCTC 3260 / NRRL B-441) (Lactobacillus paracasei).